Here is a 66-residue protein sequence, read N- to C-terminus: U10-theraphotoxin-Cg1a 2 (66 aa).

The signal sequence occupies residues 1–21 (MKTSVLFVIFGLALLLCLSFA). Positions 22–29 (AELEDTGR) are excised as a propeptide. Disulfide bonds link Cys31–Cys46, Cys38–Cys51, and Cys45–Cys58.

Belongs to the neurotoxin 10 (Hwtx-1) family. 29 (Jztx-13) subfamily. Expressed by the venom gland.

It localises to the secreted. In terms of biological role, probable ion channel inhibitor. The protein is U10-theraphotoxin-Cg1a 2 of Chilobrachys guangxiensis (Chinese earth tiger tarantula).